Reading from the N-terminus, the 368-residue chain is Peptide chain release factor 2 (368 aa).

An N5-methylglutamine modification is found at glutamine 251.

This sequence belongs to the prokaryotic/mitochondrial release factor family. Post-translationally, methylated by PrmC. Methylation increases the termination efficiency of RF2.

Its subcellular location is the cytoplasm. Peptide chain release factor 2 directs the termination of translation in response to the peptide chain termination codons UGA and UAA. The chain is Peptide chain release factor 2 from Streptomyces avermitilis (strain ATCC 31267 / DSM 46492 / JCM 5070 / NBRC 14893 / NCIMB 12804 / NRRL 8165 / MA-4680).